A 158-amino-acid chain; its full sequence is Small ribosomal subunit protein uS9 (158 aa).

Belongs to the universal ribosomal protein uS9 family.

This is Small ribosomal subunit protein uS9 from Brucella melitensis biotype 1 (strain ATCC 23456 / CCUG 17765 / NCTC 10094 / 16M).